The sequence spans 928 residues: Neuropilin-1 (928 aa).

The signal sequence occupies residues 1–21; that stretch reads MLLRLLSCCCWLLCSLRSSWA. Over 22–860 the chain is Extracellular; that stretch reads SRNDKCGDTI…PGNVLKTLDP (839 aa). 3 disulfides stabilise this stretch: Cys-27/Cys-54, Cys-82/Cys-104, and Cys-147/Cys-173. CUB domains are found at residues 27–141 and 147–265; these read CGDT…YEVF and CSRN…FSVV. N-linked (GlcNAc...) asparagine glycosylation occurs at Asn-150. Residues Glu-195, Asp-209, and Asp-250 each contribute to the Ca(2+) site. Cysteines 206 and 228 form a disulfide. N-linked (GlcNAc...) asparagine glycans are attached at residues Asn-261, Asn-300, and Asn-523. Intrachain disulfides connect Cys-275–Cys-424 and Cys-431–Cys-584. F5/8 type C domains lie at 275-424 and 431-584; these read CKEA…LYGC and CSRM…LLGC. Ser-613 carries O-linked (Xyl...) (chondroitin sulfate) serine; alternate glycosylation. A glycan (O-linked (Xyl...) (heparan sulfate) serine; alternate) is linked at Ser-613. Residues 624 to 645 are disordered; the sequence is GATGQSTETPTVEASPEEPDMT. The segment covering 625–635 has biased composition (polar residues); sequence ATGQSTETPTV. In terms of domain architecture, MAM spans 646–812; sequence HSDLDCKFGW…NHISPSQCRA (167 aa). Ser-834 carries O-linked (Xyl...) (chondroitin sulfate) serine glycosylation. The N-linked (GlcNAc...) asparagine glycan is linked to Asn-844. The helical transmembrane segment at 861–883 threads the bilayer; the sequence is ILITIIAMSALGVLLGAICGVVL. Topologically, residues 884–928 are cytoplasmic; it reads YCACWHNGMSERNLSALENYNFELVDGVKLKKDKLNTQNSYSEAS.

The protein belongs to the neuropilin family. In terms of assembly, homodimer, and heterodimer. As to expression, retinal ganglion cells and visual center neurons.

The protein resides in the mitochondrion membrane. It localises to the cell membrane. Functionally, receptor involved in the development of the cardiovascular system, in angiogenesis, in the formation of certain neuronal circuits and in organogenesis outside the nervous system. Mediates the chemorepulsant activity of semaphorins. Binding to VEGFA initiates a signaling pathway needed for motor neuron axon guidance and cell body migration, including for the caudal migration of facial motor neurons from rhombomere 4 to rhombomere 6 during embryonic development. Regulates mitochondrial iron transport via interaction. The sequence is that of Neuropilin-1 (nrp1) from Xenopus laevis (African clawed frog).